A 233-amino-acid polypeptide reads, in one-letter code: Octanoyltransferase (233 aa).

Residues 36-211 enclose the BPL/LPL catalytic domain; the sequence is DTTPDEIWLV…EFTRQLGYPT (176 aa). Substrate contacts are provided by residues 75–82, 142–144, and 155–157; these read RGGQVTYH, SLG, and GLA. The Acyl-thioester intermediate role is filled by Cys-173.

It belongs to the LipB family.

The protein localises to the cytoplasm. It carries out the reaction octanoyl-[ACP] + L-lysyl-[protein] = N(6)-octanoyl-L-lysyl-[protein] + holo-[ACP] + H(+). It functions in the pathway protein modification; protein lipoylation via endogenous pathway; protein N(6)-(lipoyl)lysine from octanoyl-[acyl-carrier-protein]: step 1/2. In terms of biological role, catalyzes the transfer of endogenously produced octanoic acid from octanoyl-acyl-carrier-protein onto the lipoyl domains of lipoate-dependent enzymes. Lipoyl-ACP can also act as a substrate although octanoyl-ACP is likely to be the physiological substrate. In Yersinia pestis bv. Antiqua (strain Antiqua), this protein is Octanoyltransferase.